The sequence spans 460 residues: Elongation factor 1-alpha-A (460 aa).

G2 is subject to N,N,N-trimethylglycine. K3 carries the N6,N6-dimethyllysine; alternate modification. An N6-methyllysine; alternate modification is found at K3. Residues 5–240 (KGHINVVVIG…DSIEPPARPT (236 aa)) enclose the tr-type G domain. Positions 14-21 (GHVDSGKS) are G1. 14 to 21 (GHVDSGKS) provides a ligand contact to GTP. The residue at position 30 (K30) is an N6-methyllysine. A G2 region spans residues 70-74 (GITID). N6,N6,N6-trimethyllysine is present on K79. Residues 91 to 94 (DAPG) are G3. Residues 91–95 (DAPGH) and 153–156 (NKMD) contribute to the GTP site. Positions 153–156 (NKMD) are G4. Positions 192 to 194 (SGF) are G5. K316 carries the post-translational modification N6,N6-dimethyllysine; alternate. K316 bears the N6-methyllysine; alternate mark. K390 carries the N6-methyllysine modification.

The protein belongs to the TRAFAC class translation factor GTPase superfamily. Classic translation factor GTPase family. EF-Tu/EF-1A subfamily.

It is found in the cytoplasm. In terms of biological role, this protein promotes the GTP-dependent binding of aminoacyl-tRNA to the A-site of ribosomes during protein biosynthesis. The sequence is that of Elongation factor 1-alpha-A (tef101) from Schizosaccharomyces pombe (strain 972 / ATCC 24843) (Fission yeast).